Here is a 117-residue protein sequence, read N- to C-terminus: Immunoglobulin heavy variable 3-7 (117 aa).

Positions 1 to 19 (MELGLSWVFLVAILEGVQC) are cleaved as a signal peptide. The segment at 20–44 (EVQLVESGGGLVQPGGSLRLSCAAS) is framework-1. The region spanning 20-117 (EVQLVESGGG…EDTAVYYCAR (98 aa)) is the Ig-like domain. A disulfide bridge connects residues C41 and C115. The interval 45–52 (GFTFSSYW) is complementarity-determining-1. A framework-2 region spans residues 53 to 69 (MSWVRQAPGKGLEWVAN). Residues 70 to 77 (IKQDGSEK) form a complementarity-determining-2 region. Positions 78 to 115 (YYVDSVKGRFTISRDNAKNSLYLQMNSLRAEDTAVYYC) are framework-3. A complementarity-determining-3 region spans residues 116 to 117 (AR).

In terms of assembly, immunoglobulins are composed of two identical heavy chains and two identical light chains; disulfide-linked.

It localises to the secreted. Its subcellular location is the cell membrane. In terms of biological role, v region of the variable domain of immunoglobulin heavy chains that participates in the antigen recognition. Immunoglobulins, also known as antibodies, are membrane-bound or secreted glycoproteins produced by B lymphocytes. In the recognition phase of humoral immunity, the membrane-bound immunoglobulins serve as receptors which, upon binding of a specific antigen, trigger the clonal expansion and differentiation of B lymphocytes into immunoglobulins-secreting plasma cells. Secreted immunoglobulins mediate the effector phase of humoral immunity, which results in the elimination of bound antigens. The antigen binding site is formed by the variable domain of one heavy chain, together with that of its associated light chain. Thus, each immunoglobulin has two antigen binding sites with remarkable affinity for a particular antigen. The variable domains are assembled by a process called V-(D)-J rearrangement and can then be subjected to somatic hypermutations which, after exposure to antigen and selection, allow affinity maturation for a particular antigen. This Homo sapiens (Human) protein is Immunoglobulin heavy variable 3-7.